Reading from the N-terminus, the 218-residue chain is Ras-related protein R-Ras (218 aa).

Residues 1 to 30 (MSSGAASGTGRGRPRGGGPGPRDPPPGETH) are disordered. Residues 7 to 20 (SGTGRGRPRGGGPG) show a composition bias toward gly residues. Residue 36-44 (GGGGVGKSA) participates in GTP binding. Positions 58 to 66 (YDPTIEDSY) match the Effector region motif. GTP is bound by residues 83-87 (DTAGQ), 142-145 (NKAD), and 172-174 (SAK). The residue at position 215 (Cys215) is a Cysteine methyl ester. Cys215 carries S-geranylgeranyl cysteine lipidation. Residues 216 to 218 (VLL) constitute a propeptide, removed in mature form.

This sequence belongs to the small GTPase superfamily. Ras family. As to quaternary structure, interacts with PLCE1. Interacts (active GTP-bound form preferentially) with RGS14. Interacts with OSBPL3. Interacts with ZDHHC19. Post-translationally, S-palmitoylated by ZDHHC19, leading to increased association with membranes and with rafts/caveolae as well as enhanced cell viability.

It is found in the cell membrane. The enzyme catalyses GTP + H2O = GDP + phosphate + H(+). In terms of biological role, GTP-binding protein with GTPase activity, likely involved in the regulation of MAPK signaling pathway and thereby controlling multiple cellular processes. Regulates the organization of the actin cytoskeleton. With OSPBL3, modulates integrin beta-1 (ITGB1) activity. The polypeptide is Ras-related protein R-Ras (Rras) (Rattus norvegicus (Rat)).